Here is a 213-residue protein sequence, read N- to C-terminus: Uridine kinase (213 aa).

13-20 (GGSCSGKT) contributes to the ATP binding site.

Belongs to the uridine kinase family.

The protein resides in the cytoplasm. It catalyses the reaction uridine + ATP = UMP + ADP + H(+). The enzyme catalyses cytidine + ATP = CMP + ADP + H(+). It participates in pyrimidine metabolism; CTP biosynthesis via salvage pathway; CTP from cytidine: step 1/3. The protein operates within pyrimidine metabolism; UMP biosynthesis via salvage pathway; UMP from uridine: step 1/1. The polypeptide is Uridine kinase (udk) (Mycoplasma pneumoniae (strain ATCC 29342 / M129 / Subtype 1) (Mycoplasmoides pneumoniae)).